The sequence spans 248 residues: Probable transcriptional regulatory protein blr1534 (248 aa).

Positions 1 to 21 (MAGHSQFKNIMHRKGRQDAQK) are disordered.

It belongs to the TACO1 family.

The protein localises to the cytoplasm. The chain is Probable transcriptional regulatory protein blr1534 from Bradyrhizobium diazoefficiens (strain JCM 10833 / BCRC 13528 / IAM 13628 / NBRC 14792 / USDA 110).